The following is a 74-amino-acid chain: Cytochrome b (74 aa).

A helical transmembrane segment spans residues 34 to 54; the sequence is FGSLLAICLVTQILTGLLLAM.

It belongs to the cytochrome b family. In terms of assembly, the cytochrome bc1 complex contains 11 subunits: 3 respiratory subunits (MT-CYB, CYC1 and UQCRFS1), 2 core proteins (UQCRC1 and UQCRC2) and 6 low-molecular weight proteins (UQCRH/QCR6, UQCRB/QCR7, UQCRQ/QCR8, UQCR10/QCR9, UQCR11/QCR10 and a cleavage product of UQCRFS1). This cytochrome bc1 complex then forms a dimer. Heme is required as a cofactor.

It localises to the mitochondrion inner membrane. Its function is as follows. Component of the ubiquinol-cytochrome c reductase complex (complex III or cytochrome b-c1 complex) that is part of the mitochondrial respiratory chain. The b-c1 complex mediates electron transfer from ubiquinol to cytochrome c. Contributes to the generation of a proton gradient across the mitochondrial membrane that is then used for ATP synthesis. This chain is Cytochrome b (MT-CYB), found in Anser caerulescens (Snow goose).